Here is a 1397-residue protein sequence, read N- to C-terminus: Probable cyclin-dependent serine/threonine-protein kinase DDB_G0292550 (1397 aa).

In terms of domain architecture, Protein kinase spans 4-287 (FQIIELIGSG…TKEALNHPWF (284 aa)). ATP-binding positions include 10–18 (IGSGSYGKV) and Lys-33. Asp-124 functions as the Proton acceptor in the catalytic mechanism. Disordered stretches follow at residues 412–567 (NNNN…NNNN), 671–728 (PLSI…NNGF), 763–831 (NEMG…NGNN), 845–949 (NNNN…YANH), 996–1101 (NGLA…NTHN), 1115–1174 (NNGF…NSPV), 1227–1324 (NSAS…SFGL), and 1340–1397 (KKKK…IVLD). Over residues 676-715 (SQHHNTSSSDTHNNNNNNYNNNNNNNNNINNNNINSIHNQ) the composition is skewed to low complexity. Low complexity-rich tracts occupy residues 845–941 (NNNN…NGNG), 1012–1021 (NSNNNNSGNN), 1028–1101 (NTFN…NTHN), and 1115–1155 (NNGF…TKNN). Positions 1156–1171 (TQFGPNILSSTQTSHN) are enriched in polar residues. 2 stretches are compositionally biased toward low complexity: residues 1253–1321 (NNNN…NNNS) and 1354–1380 (SSSQQSQTQQQHQIQQQSQTQQQSQTQ).

The protein belongs to the protein kinase superfamily. CMGC Ser/Thr protein kinase family. CDC2/CDKX subfamily.

It catalyses the reaction L-seryl-[protein] + ATP = O-phospho-L-seryl-[protein] + ADP + H(+). The catalysed reaction is L-threonyl-[protein] + ATP = O-phospho-L-threonyl-[protein] + ADP + H(+). This Dictyostelium discoideum (Social amoeba) protein is Probable cyclin-dependent serine/threonine-protein kinase DDB_G0292550.